Reading from the N-terminus, the 601-residue chain is NADH-ubiquinone oxidoreductase chain 5 (601 aa).

Transmembrane regions (helical) follow at residues 3 to 23, 36 to 56, 84 to 104, 114 to 134, 140 to 160, 171 to 191, 201 to 221, 240 to 260, 272 to 292, 324 to 346, 365 to 385, 404 to 426, 456 to 476, 483 to 503, and 581 to 601; these read LIMPFSIITLTILTIPIMMSY, VTSSVSYAFMTSMIPTMMFLL, FFSIIFVSVALFVTWSIMEFS, INQFFKYLLLFLITMMILVTA, LFIGWEGVGIMSFLLIGWWYG, AILYNRIGDIGFILTMAWLLL, IFMLKPTNLLPLLGLLVAAAG, TPVSALLHSSTMVVAGIFLLV, ILTMTLCLGAITTLFTAICAL, AFLHICTHAFFKAMLFMCSGSII, MPFTSSCLMIGSLALTGMPFL, NAWALLITLLATSFTASYSTRLI, LALGSIFAGFLISNYIPPLIT, LYMKLSALAVTIMGFMVAMGL, and LIKLYFMSFIISMTLATMLII.

It belongs to the complex I subunit 5 family.

It localises to the mitochondrion inner membrane. It carries out the reaction a ubiquinone + NADH + 5 H(+)(in) = a ubiquinol + NAD(+) + 4 H(+)(out). In terms of biological role, core subunit of the mitochondrial membrane respiratory chain NADH dehydrogenase (Complex I) that is believed to belong to the minimal assembly required for catalysis. Complex I functions in the transfer of electrons from NADH to the respiratory chain. The immediate electron acceptor for the enzyme is believed to be ubiquinone. This chain is NADH-ubiquinone oxidoreductase chain 5 (MT-ND5), found in Dasypus novemcinctus (Nine-banded armadillo).